The following is a 348-amino-acid chain: Probable dual-specificity RNA methyltransferase RlmN (348 aa).

The active-site Proton acceptor is Glu92. Residues 98 to 331 enclose the Radical SAM core domain; it reads HPDRVTACIS…NEIRREKGTD (234 aa). A disulfide bridge links Cys105 with Cys336. The [4Fe-4S] cluster site is built by Cys112, Cys116, and Cys119. Residues 159–160, Ser191, 214–216, and Asn290 contribute to the S-adenosyl-L-methionine site; these read GE and SLH. The active-site S-methylcysteine intermediate is the Cys336.

It belongs to the radical SAM superfamily. RlmN family. Requires [4Fe-4S] cluster as cofactor.

It localises to the cytoplasm. It catalyses the reaction adenosine(2503) in 23S rRNA + 2 reduced [2Fe-2S]-[ferredoxin] + 2 S-adenosyl-L-methionine = 2-methyladenosine(2503) in 23S rRNA + 5'-deoxyadenosine + L-methionine + 2 oxidized [2Fe-2S]-[ferredoxin] + S-adenosyl-L-homocysteine. It carries out the reaction adenosine(37) in tRNA + 2 reduced [2Fe-2S]-[ferredoxin] + 2 S-adenosyl-L-methionine = 2-methyladenosine(37) in tRNA + 5'-deoxyadenosine + L-methionine + 2 oxidized [2Fe-2S]-[ferredoxin] + S-adenosyl-L-homocysteine. Functionally, specifically methylates position 2 of adenine 2503 in 23S rRNA and position 2 of adenine 37 in tRNAs. The polypeptide is Probable dual-specificity RNA methyltransferase RlmN (Fervidobacterium nodosum (strain ATCC 35602 / DSM 5306 / Rt17-B1)).